The following is a 148-amino-acid chain: Snaclec B9 (148 aa).

A signal peptide spans M1–A24. Disulfide bonds link C27–C38, C55–C144, and C121–C136. Positions Y34 to K145 constitute a C-type lectin domain. 2 N-linked (GlcNAc...) asparagine glycosylation sites follow: N57 and N60.

This sequence belongs to the snaclec family. As to quaternary structure, heterodimer; disulfide-linked. As to expression, expressed by the venom gland.

It localises to the secreted. Functionally, interferes with one step of hemostasis (modulation of platelet aggregation, or coagulation cascade, for example). The sequence is that of Snaclec B9 from Macrovipera lebetinus (Levantine viper).